The primary structure comprises 187 residues: Adenine phosphoribosyltransferase (187 aa).

It belongs to the purine/pyrimidine phosphoribosyltransferase family. In terms of assembly, homodimer.

Its subcellular location is the cytoplasm. The enzyme catalyses AMP + diphosphate = 5-phospho-alpha-D-ribose 1-diphosphate + adenine. It functions in the pathway purine metabolism; AMP biosynthesis via salvage pathway; AMP from adenine: step 1/1. In terms of biological role, catalyzes a salvage reaction resulting in the formation of AMP, that is energically less costly than de novo synthesis. This is Adenine phosphoribosyltransferase from Yersinia pseudotuberculosis serotype I (strain IP32953).